A 596-amino-acid polypeptide reads, in one-letter code: Cytochrome P450 monooxygenase FUM15 (596 aa).

A disordered region spans residues 476–512 (DRWLSPKNGNREATEQSKFKIGNQKRDSTAAPEVTQE). Basic and acidic residues predominate over residues 484–503 (GNREATEQSKFKIGNQKRDS). Cysteine 536 provides a ligand contact to heme.

It belongs to the cytochrome P450 family. It depends on heme as a cofactor.

The protein localises to the endoplasmic reticulum. Its pathway is secondary metabolite biosynthesis. Cytochrome P450 monooxygenase; part of the gene cluster that mediates the biosynthesis of fumonisins B1 (FB1), B2 (FB2), B3 (FB3), and B4 (FB4), which are carcinogenic mycotoxins. Within the pathway, FUM15 may be responsible for the hydroxylations at positions C-14 and/or C-15. Also plays a role in self-protection from FB1 toxicity, probably through derivatization of FB1, and may contribute to ceramide biosynthesis. The biosynthesis starts with the FUM1-catalyzed carbon chain assembly from one molecule of acetyl-CoA, eight molecules of malonyl-CoA, and two molecules of methionine (in S-adenosyl form). The C18 polyketide chain is released from the enzyme by a nucleophilic attack of a carbanion, which is derived from R-carbon of alanine by decarboxylation, on the carbonyl carbon of polyketide acyl chain. This step is catalyzed by the pyridoxal 5'-phosphate-dependent aminoacyl transferase FUM8. The resultant 3-keto intermediate is then stereospecifically reduced to a 3-hydroxyl product by reductase FUM13. Subsequent oxidations at C-10 by the cytochrome P450 monooxygenase FUM2, C-14 and C-15 by FUM6, FUM12 or FUM15, tricarballylic esterification of the hydroxyl groups on C-14 and C-15 by acyltransferase FUM14, and C-5 hydroxylation by 2-keto-glutarate-dependent dioxygenase FUM3 furnish the biosynthesis of fumonisins. The tricarballylic moieties are most likely derived from the citric acid cycle, and their addition to the carbon backbone may involve FUM7, FUM10, FUM11 and FUM14. This Gibberella moniliformis (strain M3125 / FGSC 7600) (Maize ear and stalk rot fungus) protein is Cytochrome P450 monooxygenase FUM15.